Reading from the N-terminus, the 296-residue chain is ATP synthase gamma chain (296 aa).

It belongs to the ATPase gamma chain family. F-type ATPases have 2 components, CF(1) - the catalytic core - and CF(0) - the membrane proton channel. CF(1) has five subunits: alpha(3), beta(3), gamma(1), delta(1), epsilon(1). CF(0) has three main subunits: a, b and c.

Its subcellular location is the cell inner membrane. In terms of biological role, produces ATP from ADP in the presence of a proton gradient across the membrane. The gamma chain is believed to be important in regulating ATPase activity and the flow of protons through the CF(0) complex. In Rhodopirellula baltica (strain DSM 10527 / NCIMB 13988 / SH1), this protein is ATP synthase gamma chain.